A 260-amino-acid chain; its full sequence is Large ribosomal subunit protein eL8A (260 aa).

Residues 1–34 (MPSSKKVAPAPLATKSKASTSTKNPLFESTPKNF) are disordered.

It belongs to the eukaryotic ribosomal protein eL8 family. In terms of assembly, component of the large ribosomal subunit. Mature ribosomes consist of a small (40S) and a large (60S) subunit. The 40S subunit contains about 32 different proteins and 1 molecule of RNA (18S). The 60S subunit contains 45 different proteins and 3 molecules of RNA (25S, 5.8S and 5S).

Its subcellular location is the cytoplasm. Its function is as follows. Component of the ribosome, a large ribonucleoprotein complex responsible for the synthesis of proteins in the cell. The small ribosomal subunit (SSU) binds messenger RNAs (mRNAs) and translates the encoded message by selecting cognate aminoacyl-transfer RNA (tRNA) molecules. The large subunit (LSU) contains the ribosomal catalytic site termed the peptidyl transferase center (PTC), which catalyzes the formation of peptide bonds, thereby polymerizing the amino acids delivered by tRNAs into a polypeptide chain. The nascent polypeptides leave the ribosome through a tunnel in the LSU and interact with protein factors that function in enzymatic processing, targeting, and the membrane insertion of nascent chains at the exit of the ribosomal tunnel. This chain is Large ribosomal subunit protein eL8A, found in Candida albicans (strain SC5314 / ATCC MYA-2876) (Yeast).